The sequence spans 395 residues: MTLPVNPVDNLAALIRCPSVTPAEGGALTALEKMLKLMGFSANRPVFSDDNTPDIENLYARKSGNGPHLMFAGHTDVVPPGDEKDWKHPPFAAEIEDGVMYGRGAVDMKGGIACFVAAVARHIEKHGNIKGSISFLITGDEEGPAVNGTVKLLEWAKQRGESWDASIVGEPTNPNALGDMIKIGRRGSLSGTITVHGVQGHAAYPHLAENPVRGIVTLVDSLLYPAFDEGTANFQASNLEVTTIDVGNKATNVIPNKATASFNIRFNDTWTAESLQAEIISRLERAARDNRLRQGRETPIKYELTWRERPSHVFLTHDEKLIGTLTASVEAVTGKRPELSTSGGTSDARFIKDYCPVVEFGLTGQTMHMVDERVALADLEGLTQIYERFIADFFG.

H74 contacts Zn(2+). The active site involves D76. D107 is a binding site for Zn(2+). Residue E141 is the Proton acceptor of the active site. Positions 142, 170, and 368 each coordinate Zn(2+).

Belongs to the peptidase M20A family. DapE subfamily. As to quaternary structure, homodimer. Zn(2+) serves as cofactor. Co(2+) is required as a cofactor.

It carries out the reaction N-succinyl-(2S,6S)-2,6-diaminopimelate + H2O = (2S,6S)-2,6-diaminopimelate + succinate. It participates in amino-acid biosynthesis; L-lysine biosynthesis via DAP pathway; LL-2,6-diaminopimelate from (S)-tetrahydrodipicolinate (succinylase route): step 3/3. Catalyzes the hydrolysis of N-succinyl-L,L-diaminopimelic acid (SDAP), forming succinate and LL-2,6-diaminopimelate (DAP), an intermediate involved in the bacterial biosynthesis of lysine and meso-diaminopimelic acid, an essential component of bacterial cell walls. In Brucella abortus (strain S19), this protein is Succinyl-diaminopimelate desuccinylase.